The following is a 407-amino-acid chain: MAEEEERGPGSVYQMFVLMEDLLDKLKVLDYEQHVLDKHNIKPLSRHYFVSSPHVLSNPGEQFYMFSVIAAWLITLCGRPFDTPQEYDDPNATVSNILSELRTLGGQVDFPPSKLKTGSGEHVCYVLDQLVEKALKSKGFAWNRPLYPSVEVEDECVQEDDAELTLSKVEEEMTQEDEEYEEEDGLDLDALKTRTNGELSGSRPAVVLESDVDAAEWNLEVERVLPQLKVTIRTDNKDWRIHLDQMHQHQDGINTSLQDAKGCLFKLREDISKTLEKVSSREKYLNTQLEHLISEYRQAQSQLNKVKELYQQASGGVTERTRILAEISEELDKVKQEMEEKGSSMSDGAPVVKIRQSLTKLKQEIEQMDVRMGVVEHTLLQAKLREKNNMTRDMHATHLLEPNAQAY.

Coiled-coil stretches lie at residues 158 to 186 and 283 to 373; these read QEDD…EDGL and KYLN…VRMG. Residues 313–404 are pDED; sequence ASGGVTERTR…HATHLLEPNA (92 aa).

This sequence belongs to the IFT57 family.

It is found in the cytoplasm. It localises to the cytoskeleton. Its subcellular location is the cilium basal body. Functionally, required for the formation of cilia. Essential for differentiation and survival of sensory neurons. May also have pro-apoptotic function. The polypeptide is Intraflagellar transport protein 57 homolog (ift57) (Danio rerio (Zebrafish)).